Here is a 411-residue protein sequence, read N- to C-terminus: Lysosome-associated membrane glycoprotein 3 (411 aa).

A signal peptide spans 1 to 21; it reads MPGQISAVAVLFLSLTVILHG. Over 22–376 the chain is Lumenal; that stretch reads YQIREKEFPK…NVNECLSDYT (355 aa). The segment covering 172–192 has biased composition (polar residues); sequence HKSTTNQRPTLSTNVLGTSTP. The segment at 172 to 204 is disordered; sequence HKSTTNQRPTLSTNVLGTSTPTHKDRSTTSPVP. An N-linked (GlcNAc...) asparagine glycan is attached at Asn227. 2 cysteine pairs are disulfide-bonded: Cys232–Cys269 and Cys334–Cys371. A helical membrane pass occupies residues 377–397; it reads VVLPMVAIIVVVICVVGLSVY. Residues 398–411 lie on the Cytoplasmic side of the membrane; it reads KIRQRHQSSAYQRI.

Belongs to the LAMP family. Monomer. Interacts with FURIN.

Its subcellular location is the cell surface. The protein resides in the lysosome membrane. It is found in the cytoplasmic vesicle membrane. The protein localises to the early endosome membrane. In terms of biological role, lysosomal membrane glycoprotein which plays a role in the unfolded protein response (UPR) that contributes to protein degradation and cell survival during proteasomal dysfunction. Plays a role in the process of fusion of the lysosome with the autophagosome, thereby modulating the autophagic process. Promotes hepatocellular lipogenesis through activation of the PI3K/Akt pathway. May also play a role in dendritic cell function and in adaptive immunity. The chain is Lysosome-associated membrane glycoprotein 3 (Lamp3) from Mus musculus (Mouse).